A 653-amino-acid chain; its full sequence is Fructose-1,6-bisphosphatase class 3 (653 aa).

The protein belongs to the FBPase class 3 family. Requires Mn(2+) as cofactor.

It carries out the reaction beta-D-fructose 1,6-bisphosphate + H2O = beta-D-fructose 6-phosphate + phosphate. Its pathway is carbohydrate biosynthesis; gluconeogenesis. The sequence is that of Fructose-1,6-bisphosphatase class 3 from Listeria innocua serovar 6a (strain ATCC BAA-680 / CLIP 11262).